We begin with the raw amino-acid sequence, 91 residues long: MTNAKMTFAVQFSERYINKYIGSPIDDLMVSMAGTTQSYQMRLKRSKDSRAMLTTGWNQLIDAKAFDEGDVCLFHFKEVDDVLVLKVHVLK.

Positions 1–91 (MTNAKMTFAV…VLVLKVHVLK (91 aa)) form a DNA-binding region, TF-B3.

The protein resides in the nucleus. This Oryza sativa subsp. japonica (Rice) protein is B3 domain-containing protein Os03g0164300.